A 279-amino-acid chain; its full sequence is Cholesterol 25-hydroxylase-like protein 2 (279 aa).

Asn6 and Asn13 each carry an N-linked (GlcNAc...) asparagine glycan. Transmembrane regions follow at residues 36–56 (LFPV…YTVL), 86–106 (LALT…AQWL), and 120–140 (LTAF…QYYL). The Fatty acid hydroxylase domain occupies 128–262 (VGCTVVFDFQ…FAHWDWLGGT (135 aa)). The short motif at 141–145 (WHLLH) is the Histidine box-1 element. The Histidine box-2 signature appears at 156–160 (HALHH). A run of 2 transmembrane segments spans residues 165-185 (TFSL…GFWT) and 189-209 (PLLL…NIWV). The Histidine box-3 signature appears at 237–243 (RHDAHHQ).

Belongs to the sterol desaturase family. Requires Fe cation as cofactor.

The protein resides in the endoplasmic reticulum membrane. Its function is as follows. May catalyze the formation of 25-hydroxycholesterol from cholesterol. The polypeptide is Cholesterol 25-hydroxylase-like protein 2 (Danio rerio (Zebrafish)).